The sequence spans 142 residues: Hemoglobin subunit alpha-3 (142 aa).

The 141-residue stretch at 2-142 (TLTDSDKAAV…VATVLTSKYR (141 aa)) folds into the Globin domain. Position 59 (H59) interacts with O2. H88 serves as a coordination point for heme b.

Belongs to the globin family. Heterotetramer of two alpha chains and two beta chains. Red blood cells.

In terms of biological role, this is a larval (tadpole) alpha-globin. The sequence is that of Hemoglobin subunit alpha-3 (hba3) from Xenopus laevis (African clawed frog).